The primary structure comprises 480 residues: Pyruvate kinase (480 aa).

Arg-36 contacts substrate. Positions 38, 40, and 70 each coordinate K(+). Asn-38 to His-41 is a binding site for ATP. Residues Arg-77 and Lys-160 each contribute to the ATP site. Glu-225 provides a ligand contact to Mg(2+). 3 residues coordinate substrate: Gly-251, Asp-252, and Thr-284. Residue Asp-252 coordinates Mg(2+).

It belongs to the pyruvate kinase family. Homotetramer. The cofactor is Mg(2+). K(+) serves as cofactor.

The catalysed reaction is pyruvate + ATP = phosphoenolpyruvate + ADP + H(+). Its pathway is carbohydrate degradation; glycolysis; pyruvate from D-glyceraldehyde 3-phosphate: step 5/5. With respect to regulation, allosterically activated by AMP and by several sugar phosphates. Belongs to type II PK. In Buchnera aphidicola subsp. Acyrthosiphon pisum (strain APS) (Acyrthosiphon pisum symbiotic bacterium), this protein is Pyruvate kinase (pykA).